Consider the following 615-residue polypeptide: 1-deoxy-D-xylulose-5-phosphate synthase (615 aa).

Thiamine diphosphate contacts are provided by residues H72 and 111–113 (GHS). D142 provides a ligand contact to Mg(2+). Residues 143 to 144 (GA), N171, Y278, and E360 contribute to the thiamine diphosphate site. N171 is a Mg(2+) binding site.

The protein belongs to the transketolase family. DXPS subfamily. As to quaternary structure, homodimer. The cofactor is Mg(2+). It depends on thiamine diphosphate as a cofactor.

The catalysed reaction is D-glyceraldehyde 3-phosphate + pyruvate + H(+) = 1-deoxy-D-xylulose 5-phosphate + CO2. Its pathway is metabolic intermediate biosynthesis; 1-deoxy-D-xylulose 5-phosphate biosynthesis; 1-deoxy-D-xylulose 5-phosphate from D-glyceraldehyde 3-phosphate and pyruvate: step 1/1. Its function is as follows. Catalyzes the acyloin condensation reaction between C atoms 2 and 3 of pyruvate and glyceraldehyde 3-phosphate to yield 1-deoxy-D-xylulose-5-phosphate (DXP). The chain is 1-deoxy-D-xylulose-5-phosphate synthase from Campylobacter jejuni subsp. jejuni serotype O:6 (strain 81116 / NCTC 11828).